A 288-amino-acid chain; its full sequence is Probable aquaporin PIP1-2 (288 aa).

Residues 1–37 (MEGKEEDVRLGANKFSERQPIGTAAQGSDDKDYKEPP) form a disordered region. The next 2 helical transmembrane spans lie at 57-77 (IAEF…VMGV) and 92-114 (IAWS…SGGH). The NPA 1 signature appears at 116–118 (NPA). 3 helical membrane passes run 135 to 155 (LFYM…VKGF), 177 to 197 (GDGL…VFSA), and 211 to 231 (ILAP…TIPI). The short motif at 237-239 (NPA) is the NPA 2 element. A helical transmembrane segment spans residues 259-279 (IFWVGPFIGAALAAIYHQVVI).

The protein belongs to the MIP/aquaporin (TC 1.A.8) family. PIP (TC 1.A.8.11) subfamily. As to expression, expressed in roots, leaves and anthers.

It is found in the cell membrane. In terms of biological role, aquaporins facilitate the transport of water and small neutral solutes across cell membranes. This chain is Probable aquaporin PIP1-2 (PIP1-2), found in Oryza sativa subsp. japonica (Rice).